Consider the following 285-residue polypeptide: Type II secretion system protein C (285 aa).

Residues 1–27 (MARLQAFKDPSFHSLVATFRSLPLIRR) lie on the Cytoplasmic side of the membrane. A helical transmembrane segment spans residues 28 to 48 (FVLGLILLLICQQLAVLTWRF). At 49 to 285 (LLPEDSRIVG…DIYLALDGDH (237 aa)) the chain is on the periplasmic side.

The protein belongs to the GSP C family.

It is found in the cell inner membrane. Involved in a type II secretion system (T2SS, formerly general secretion pathway, GSP) for the export of proteins. Required for the translocation of the multiple pectic enzymes. The protein is Type II secretion system protein C (outC) of Pectobacterium carotovorum subsp. carotovorum (Erwinia carotovora subsp. carotovora).